The following is a 284-amino-acid chain: Protease HtpX homolog (284 aa).

2 helical membrane passes run 7–26 and 33–47; these read TYLL…MMLH and IILA…YYMS. Histidine 129 lines the Zn(2+) pocket. The active site involves glutamate 130. Zn(2+) is bound at residue histidine 133. The next 2 helical transmembrane spans lie at 148–168 and 180–200; these read LAGA…IFFV and IGTI…QFAI. Glutamate 205 is a Zn(2+) binding site.

The protein belongs to the peptidase M48B family. Requires Zn(2+) as cofactor.

The protein localises to the cell membrane. This chain is Protease HtpX homolog, found in Methanocaldococcus jannaschii (strain ATCC 43067 / DSM 2661 / JAL-1 / JCM 10045 / NBRC 100440) (Methanococcus jannaschii).